The following is a 410-amino-acid chain: Mannosyl phosphorylinositol ceramide synthase regulatory protein CSG2 (410 aa).

An N-terminal signal peptide occupies residues 1–17; it reads MSTTLLWFSSVIGYVIQ. The Lumenal portion of the chain corresponds to 18-50; the sequence is TKCLSNIQSKKEISVGPNGTIATPETNGDNGNS. N-linked (GlcNAc...) asparagine glycosylation is found at Asn35 and Asn49. The chain crosses the membrane as a helical span at residues 51-71; that stretch reads SSLTFYLTFMYFASWLLLVPA. Topologically, residues 72-141 are cytoplasmic; sequence SRLWEKMRPM…SVATFKYVAK (70 aa). Residues 142–161 form a helical membrane-spanning segment; sequence LTVLALIMIVADLTYNMALS. The Lumenal segment spans residues 162–167; the sequence is LSPAFD. A helical transmembrane segment spans residues 168 to 187; that stretch reads VALMQNTAIFEIVTLLYGVC. The Cytoplasmic segment spans residues 188 to 197; it reads GISRKNYVFR. Residues 198 to 217 form a helical membrane-spanning segment; sequence NFLIMMNAVIGILIISYTKA. The Lumenal portion of the chain corresponds to 218–245; sequence TCDMLAGKLSVNPNTGELSDPFLFDRLK. A helical membrane pass occupies residues 246-265; sequence GALICGLGALIMGPFAVLWN. Topologically, residues 266-285 are cytoplasmic; the sequence is RWFCSNISKNENSAVVLVKQ. The helical transmembrane segment at 286–305 threads the bilayer; sequence STHMALIGIIGMVILLPFIP. Over 306–324 the chain is Lumenal; that stretch reads KFPSRESVESISLFYNDKS. A helical membrane pass occupies residues 325-344; it reads FWFSLLGSIIFGSLPSLISI. Over 345-355 the chain is Cytoplasmic; the sequence is LELNRKAPAEY. A helical membrane pass occupies residues 356–374; sequence LTTCNLGAIIFMGLAEWVC. At 375–385 the chain is on the lumenal side; that stretch reads EPTQTTIVRWE. Residues 386-404 form a helical membrane-spanning segment; that stretch reads VIGYIMLTVSLLVLSVTLG. Residues 405-410 are Cytoplasmic-facing; the sequence is EGKYHH.

As to quaternary structure, heterodimer of CSH1 and CSG2, and SUR1 and CSG2.

It is found in the endoplasmic reticulum membrane. Required for calcium regulation. May regulate calcium accumulation by a non-vacuole organelle. Also regulates the activity of CSH1 and SUR1 during mannosyl phosphorylinositol ceramide synthesis. The chain is Mannosyl phosphorylinositol ceramide synthase regulatory protein CSG2 (CSG2) from Saccharomyces cerevisiae (strain ATCC 204508 / S288c) (Baker's yeast).